The primary structure comprises 1545 residues: ATP-binding cassette sub-family C member 2 (1545 aa).

The Extracellular segment spans residues 1–27; it reads MLEKFCNSTFWNSSFLDSPEADLPLCF. N-linked (GlcNAc...) asparagine glycosylation is found at Asn7 and Asn12. A helical transmembrane segment spans residues 28–48; sequence EQTVLVWIPLGYLWLLAPWQL. Over 49–68 the chain is Cytoplasmic; sequence LHVYKSRTKRSSTTKLYLAK. A helical membrane pass occupies residues 69–89; it reads QVFVGFLLILAAIELALVLTE. Topologically, residues 90–93 are extracellular; the sequence is DSGQ. Residues 94–114 traverse the membrane as a helical segment; the sequence is ATVPAVRYTNPSLYLGTWLLV. At 115-126 the chain is on the cytoplasmic side; that stretch reads LLIQYSRQWCVQ. A helical membrane pass occupies residues 127–147; that stretch reads KNSWFLSLFWILSILCGTFQF. Topologically, residues 148–165 are extracellular; the sequence is QTLIRTLLQGDNSNLAYS. The helical transmembrane segment at 166–186 threads the bilayer; the sequence is CLFFISYGFQILILIFSAFSE. At 187–313 the chain is on the cytoplasmic side; sequence NNESSNNPSS…DVPKSWLMKA (127 aa). The tract at residues 253–284 is disordered; sequence ARRALQRRQEKSSQQNSGARLPGLNKNQSQSQ. 2 positions are modified to phosphoserine: Ser281 and Ser283. Residues 314–334 form a helical membrane-spanning segment; that stretch reads LFKTFYMVLLKSFLLKLVNDI. In terms of domain architecture, ABC transmembrane type-1 1 spans 322-605; it reads LLKSFLLKLV…LPMMISSMLQ (284 aa). Over 335–360 the chain is Extracellular; the sequence is FTFVSPQLLKLLISFASDRDTYLWIG. Residues 361 to 381 traverse the membrane as a helical segment; it reads YLCAILLFTAALIQSFCLQCY. Over 382–437 the chain is Cytoplasmic; it reads FQLCFKLGVKVRTAIMASVYKKALTLSNLARKEYTVGETVNLMSVDAQKLMDVTNF. The helical transmembrane segment at 438 to 458 threads the bilayer; that stretch reads MHMLWSSVLQIVLSIFFLWRE. Over 459–461 the chain is Extracellular; the sequence is LGP. The helical transmembrane segment at 462 to 482 threads the bilayer; that stretch reads SVLAGVGVMVLVIPINAILST. Residues 483-544 are Cytoplasmic-facing; that stretch reads KSKTIQVKNM…NLLAFSQLQC (62 aa). A helical transmembrane segment spans residues 545-565; it reads VVIFVFQLTPVLVSVVTFSVY. Residues 566–587 are Extracellular-facing; it reads VLVDSNNILDAQKAFTSITLFN. Residues 588–608 traverse the membrane as a helical segment; it reads ILRFPLSMLPMMISSMLQASV. Residues 609 to 971 lie on the Cytoplasmic side of the membrane; the sequence is STERLEKYLG…VKFSIYLEYL (363 aa). An ABC transporter 1 domain is found at 637 to 861; that stretch reads MQFSEASFTW…KGEFAKNLKT (225 aa). 671–678 provides a ligand contact to ATP; it reads GPVGSGKS. A phosphoserine mark is found at Ser878, Ser926, Ser930, and Ser938. A helical membrane pass occupies residues 972–992; that stretch reads QAIGLFSIFFIILAFVMNSVA. In terms of domain architecture, ABC transmembrane type-1 2 spans 979-1264; the sequence is IFFIILAFVM…LVRMTSEIET (286 aa). Residues 993–1033 are Extracellular-facing; it reads FIGSNLWLSAWTSDSKIFNSTDYPASQRDMRVGVYGALGLA. Asn1011 carries an N-linked (GlcNAc...) asparagine glycan. The helical transmembrane segment at 1034 to 1054 threads the bilayer; it reads QGIFVFIAHFWSAFGFVHASN. The Cytoplasmic segment spans residues 1055-1097; sequence ILHKQLLNNILRAPMRFFDTTPTGRIVNRFAGDISTVDDTLPQ. The helical transmembrane segment at 1098 to 1118 threads the bilayer; sequence SLRSWITCFLGIISTLVMICM. Ala1119 is a topological domain (extracellular). Residues 1120–1140 form a helical membrane-spanning segment; sequence TPVFTIIVIPLGIIYVSVQMF. The Cytoplasmic portion of the chain corresponds to 1141–1211; it reads YVSTSRQLRR…TSNRWLAIRL (71 aa). The chain crosses the membrane as a helical span at residues 1212 to 1232; the sequence is ELVGNLTVFFSALMMVIYRDT. The Extracellular portion of the chain corresponds to 1233–1234; that stretch reads LS. Residues 1235–1255 traverse the membrane as a helical segment; sequence GDTVGFVLSNALNITQTLNWL. The Cytoplasmic portion of the chain corresponds to 1256-1545; that stretch reads VRMTSEIETN…GIENVNSTKF (290 aa). Residues 1300–1534 enclose the ABC transporter 2 domain; the sequence is IQFNNYQVRY…PGPFYFMAKE (235 aa). 1334–1341 contributes to the ATP binding site; sequence GRTGAGKS. Phosphoserine is present on Ser1438.

Belongs to the ABC transporter superfamily. ABCC family. Conjugate transporter (TC 3.A.1.208) subfamily. Expressed by polarized cells in liver, kidney and intestine. The highest expression is found in liver. Expressed in small intestine.

It localises to the apical cell membrane. The catalysed reaction is ATP + H2O + xenobioticSide 1 = ADP + phosphate + xenobioticSide 2.. It catalyses the reaction an S-substituted glutathione(in) + ATP + H2O = an S-substituted glutathione(out) + ADP + phosphate + H(+). The enzyme catalyses taurolithocholate 3-sulfate(in) + ATP + H2O = taurolithocholate 3-sulfate(out) + ADP + phosphate + H(+). It carries out the reaction leukotriene C4(in) + ATP + H2O = leukotriene C4(out) + ADP + phosphate + H(+). The catalysed reaction is 17beta-estradiol 17-O-(beta-D-glucuronate)(in) + ATP + H2O = 17beta-estradiol 17-O-(beta-D-glucuronate)(out) + ADP + phosphate + H(+). It catalyses the reaction (4Z,15Z)-bilirubin IXalpha C8-beta-D-glucuronoside(in) + ATP + H2O = (4Z,15Z)-bilirubin IXalpha C8-beta-D-glucuronoside(out) + ADP + phosphate + H(+). The enzyme catalyses (4Z,15Z)-bilirubin IXalpha C8,C12-beta-D-bisglucuronoside(in) + ATP + H2O = (4Z,15Z)-bilirubin IXalpha C8,C12-beta-D-bisglucuronoside(out) + ADP + phosphate + H(+). Its function is as follows. ATP-dependent transporter of the ATP-binding cassette (ABC) family that binds and hydrolyzes ATP to enable active transport of various substrates including many drugs, toxicants and endogenous compound across cell membranes. Transports a wide variety of conjugated organic anions such as sulfate-, glucuronide- and glutathione (GSH)-conjugates of endo- and xenobiotics substrates. Mediates hepatobiliary excretion of mono- and bis-glucuronidated bilirubin molecules and therefore play an important role in bilirubin detoxification. Also mediates hepatobiliary excretion of others glucuronide conjugates such as 17beta-estradiol 17-glucosiduronic acid and leukotriene C4. Transports sulfated bile salt such as taurolithocholate sulfate. Transports various anticancer drugs, such as anthracycline, vinca alkaloid and methotrexate and HIV-drugs such as protease inhibitors. Confers resistance to several anti-cancer drugs including cisplatin, doxorubicin, epirubicin, methotrexate, etoposide and vincristine. In Homo sapiens (Human), this protein is ATP-binding cassette sub-family C member 2.